The chain runs to 331 residues: DNA-directed RNA polymerase subunit alpha (331 aa).

The interval 1 to 242 (MEKFLRYNIQ…EHYKPIVTEL (242 aa)) is alpha N-terminal domain (alpha-NTD). Residues 258-331 (VSSSKSSLAI…RNLKLKEEQN (74 aa)) form an alpha C-terminal domain (alpha-CTD) region.

Belongs to the RNA polymerase alpha chain family. In terms of assembly, homodimer. The RNAP catalytic core consists of 2 alpha, 1 beta, 1 beta' and 1 omega subunit. When a sigma factor is associated with the core the holoenzyme is formed, which can initiate transcription.

It catalyses the reaction RNA(n) + a ribonucleoside 5'-triphosphate = RNA(n+1) + diphosphate. Its function is as follows. DNA-dependent RNA polymerase catalyzes the transcription of DNA into RNA using the four ribonucleoside triphosphates as substrates. The chain is DNA-directed RNA polymerase subunit alpha from Malacoplasma penetrans (strain HF-2) (Mycoplasma penetrans).